Consider the following 338-residue polypeptide: Solute carrier family 35 member G3 (338 aa).

The disordered stretch occupies residues 1–24 (MAGSHPYFNQPDSTHPSPPSAPPS). 9 helical membrane passes run 37 to 57 (TSGLLVALLGGGLPAGFVGPL), 67 to 87 (LPSLELLIWRCLFHLPIALLL), 105 to 125 (FFCALLNILSIGCAYSAVQVV), 160 to 180 (CGLLGCILGLIIIVGPGLWTL), 185 to 205 (TGVYTALGYVEAFLGGLALSL), 221 to 241 (TVAFLSGLVGLLGSVPGLFVL), 250 to 270 (LLSWSCVGAVGILALVSFTCV), 281 to 301 (LVCAVLHSEVVVALILQYYML), and 305 to 325 (VAPSDIVAAGVVLGSIAIITA). An EamA 1 domain is found at 49–174 (LPAGFVGPLS…CILGLIIIVG (126 aa)). The EamA 2 domain occupies 272 to 325 (YAVTKAHPALVCAVLHSEVVVALILQYYMLHETVAPSDIVAAGVVLGSIAIITA).

Belongs to the SLC35G solute transporter family. As to expression, expressed in testis.

The protein resides in the membrane. This is Solute carrier family 35 member G3 (SLC35G3) from Homo sapiens (Human).